The chain runs to 843 residues: Transmembrane protease serine 7 (843 aa).

The Cytoplasmic segment spans residues Met-1–Lys-76. Residues Ala-27–Lys-67 are disordered. A compositionally biased stretch (basic residues) spans Gly-56–Lys-67. Residues Ile-77–Leu-97 traverse the membrane as a helical; Signal-anchor for type II membrane protein segment. Residues Tyr-98–Leu-843 are Extracellular-facing. Residues Asp-106 to Arg-234 enclose the SEA domain. 12 disulfides stabilise this stretch: Cys-247–Cys-273, Cys-299–Cys-322, Cys-365–Cys-396, Cys-484–Cys-496, Cys-491–Cys-509, Cys-503–Cys-518, Cys-525–Cys-544, Cys-538–Cys-553, Cys-559–Cys-571, Cys-566–Cys-585, Cys-579–Cys-594, and Cys-631–Cys-647. 2 CUB domains span residues Cys-247 to Ile-360 and Cys-365 to Ser-481. LDL-receptor class A domains follow at residues Pro-483–Val-519, Phe-517–Thr-554, and Pro-558–Thr-595. The 235-residue stretch at Ile-606–Pro-840 folds into the Peptidase S1 domain. Active-site charge relay system residues include His-646 and Asp-694. 2 disulfides stabilise this stretch: Cys-730–Cys-796 and Cys-762–Cys-775. The active-site Charge relay system is Ser-790.

It belongs to the peptidase S1 family. In terms of assembly, forms a heterodimer with SERPINA5. N-glycosylated. Expressed in brain, ovary, testis, salivary gland, trachea and lung.

Its subcellular location is the cell membrane. Serine protease which preferentially hydrolyzes peptides with Arg at the P1 position. The protein is Transmembrane protease serine 7 (TMPRSS7) of Homo sapiens (Human).